Here is a 380-residue protein sequence, read N- to C-terminus: Cytosolic acyl coenzyme A thioester hydrolase (380 aa).

The HotDog ACOT-type 1 domain maps to 50-168 (PCGACITGRI…TLWYVPLSLK (119 aa)). The active site involves N66. Residues K168 and K198 each carry the N6-acetyllysine modification. The HotDog ACOT-type 2 domain maps to 224–338 (SYSQSSLIHL…FFTYVSLSQE (115 aa)). D255 is an active-site residue. N6-acetyllysine is present on K283. Residues 350-380 (ETEDEKKRFEEGKGRYLQMKAKRQGHAEPQP) form a disordered region. A compositionally biased stretch (basic and acidic residues) spans 353-363 (DEKKRFEEGKG).

In terms of assembly, homohexamer. In terms of tissue distribution, isoform 4 is expressed exclusively in brain.

The protein resides in the cytoplasm. It localises to the cytosol. Its subcellular location is the mitochondrion. The enzyme catalyses hexadecanoyl-CoA + H2O = hexadecanoate + CoA + H(+). It catalyses the reaction octanoyl-CoA + H2O = octanoate + CoA + H(+). It carries out the reaction dodecanoyl-CoA + H2O = dodecanoate + CoA + H(+). The catalysed reaction is (9Z)-octadecenoyl-CoA + H2O = (9Z)-octadecenoate + CoA + H(+). The enzyme catalyses tetradecanoyl-CoA + H2O = tetradecanoate + CoA + H(+). It catalyses the reaction decanoyl-CoA + H2O = decanoate + CoA + H(+). It carries out the reaction octadecanoyl-CoA + H2O = octadecanoate + CoA + H(+). It participates in lipid metabolism; fatty acid metabolism. Catalyzes the hydrolysis of acyl-CoAs into free fatty acids and coenzyme A (CoASH), regulating their respective intracellular levels. Preferentially hydrolyzes palmitoyl-CoA, but has a broad specificity acting on other fatty acyl-CoAs with chain-lengths of C8-C18. May play an important physiological function in brain. In Homo sapiens (Human), this protein is Cytosolic acyl coenzyme A thioester hydrolase (ACOT7).